Reading from the N-terminus, the 29-residue chain is Cytochrome b6-f complex subunit 8 (29 aa).

Residues 3–23 form a helical membrane-spanning segment; sequence IVNIAWAALMVVSTFSLTLVV.

It belongs to the PetN family. In terms of assembly, the 4 large subunits of the cytochrome b6-f complex are cytochrome b6, subunit IV (17 kDa polypeptide, PetD), cytochrome f and the Rieske protein, while the 4 small subunits are PetG, PetL, PetM and PetN. The complex functions as a dimer.

The protein localises to the plastid. It localises to the chloroplast thylakoid membrane. Component of the cytochrome b6-f complex, which mediates electron transfer between photosystem II (PSII) and photosystem I (PSI), cyclic electron flow around PSI, and state transitions. In Huperzia lucidula (Shining clubmoss), this protein is Cytochrome b6-f complex subunit 8.